A 364-amino-acid polypeptide reads, in one-letter code: MDETTREMFSPHNLPLEMMEEILLRLPVKSLTRFKCVCSSWRSLISETLFALKHALILETSKATTSTKSPYGVITTSRYHLKSCCIHSLYNASTVYVSEHDGELLGRDYYQVVGTCHGLVCFHVDYDKSLYLWNPTIKLQQRLSSSDLETSDDECVVTYGFGYDESEDDYKVVALLQQRHQVKIETKIYSTRQKLWRSNTSFPSGVVVADKSRSGIYINGTLNWAATSSSSSWTIISYDMSRDEFKELPGPVCCGRGCFTMTLGDLRGCLSMVCYCKGANADVWVMKEFGEVYSWSKLLSIPGLTDFVRPLWISDGLVVLLEFRSGLALYNCSNGRFHYPVSNSISGCRDAKVYLKTMVSPNDL.

Residues 8–54 (MFSPHNLPLEMMEEILLRLPVKSLTRFKCVCSSWRSLISETLFALKH) enclose the F-box domain. Kelch repeat units lie at residues 169 to 215 (DYKV…SRSG) and 216 to 265 (IYIN…TLGD).

The polypeptide is F-box/kelch-repeat protein At3g23880 (Arabidopsis thaliana (Mouse-ear cress)).